The primary structure comprises 150 residues: MAFHSTLLVFLAGLVFLSEAAPLVSHGSVDSKCPLMVKVLDAVRGSPAANVAVKVFKKAADGTWQDFATGKTTEFGEIHELTTEEQFVEGVYRVEFDTSSYWKGLGLSPFHEYADVVFTANDSGHRHYTIAALLSPFSYSTTAVVSDPQE.

Residues 1 to 20 form the signal peptide; the sequence is MAFHSTLLVFLAGLVFLSEA. Cysteine 33 is subject to Sulfocysteine. L-thyroxine contacts are provided by lysine 38, glutamate 77, and serine 140.

Belongs to the transthyretin family. Homotetramer. Dimer of dimers. In the homotetramer, subunits assemble around a central channel that can accommodate two ligand molecules. In terms of processing, sulfonation of the reactive cysteine Cys-33 enhances the stability of the native conformation of TTR, avoiding misassembly of the protein leading to amyloid formation. As to expression, detected in serum (at protein level). Detected in liver and choroid plexus.

It localises to the secreted. Its function is as follows. Thyroid hormone-binding protein. Probably transports thyroxine from the bloodstream to the brain. This chain is Transthyretin (TTR), found in Gallus gallus (Chicken).